The chain runs to 944 residues: 2-oxoglutarate dehydrogenase E1 component (944 aa).

The tract at residues 914–944 (RRRRSSPAEGDPTVHKKEQERIVSDSLTRKN) is disordered. Over residues 925 to 936 (PTVHKKEQERIV) the composition is skewed to basic and acidic residues.

It belongs to the alpha-ketoglutarate dehydrogenase family. In terms of assembly, homodimer. Part of the 2-oxoglutarate dehydrogenase (OGDH) complex composed of E1 (2-oxoglutarate dehydrogenase), E2 (dihydrolipoamide succinyltransferase) and E3 (dihydrolipoamide dehydrogenase); the complex contains multiple copies of the three enzymatic components (E1, E2 and E3). The cofactor is thiamine diphosphate.

The catalysed reaction is N(6)-[(R)-lipoyl]-L-lysyl-[protein] + 2-oxoglutarate + H(+) = N(6)-[(R)-S(8)-succinyldihydrolipoyl]-L-lysyl-[protein] + CO2. In terms of biological role, E1 component of the 2-oxoglutarate dehydrogenase (OGDH) complex which catalyzes the decarboxylation of 2-oxoglutarate, the first step in the conversion of 2-oxoglutarate to succinyl-CoA and CO(2). The protein is 2-oxoglutarate dehydrogenase E1 component of Bacillus licheniformis (strain ATCC 14580 / DSM 13 / JCM 2505 / CCUG 7422 / NBRC 12200 / NCIMB 9375 / NCTC 10341 / NRRL NRS-1264 / Gibson 46).